Here is a 739-residue protein sequence, read N- to C-terminus: Pre-mRNA-splicing factor ATP-dependent RNA helicase ddx-15 (739 aa).

Positions 1-19 (MSSRHRLDLDGSGRGDRRR) are enriched in basic and acidic residues. Positions 1–49 (MSSRHRLDLDGSGRGDRRRSPNRRSRSRSRSPHRRSSPDRKRQIGAVGN) are disordered. A compositionally biased stretch (basic residues) spans 20 to 35 (SPNRRSRSRSRSPHRR). One can recognise a Helicase ATP-binding domain in the interval 86–257 (MELLRNNQCI…FEDCPLLSVP (172 aa)). 99 to 106 (GETGSGKT) contributes to the ATP binding site. A DEAH box motif is present at residues 204 to 207 (DEAH). A Helicase C-terminal domain is found at 282-462 (TVIQIHMVEE…SVVLQLKKLG (181 aa)).

The protein belongs to the DEAD box helicase family. DEAH subfamily. DDX15/PRP43 sub-subfamily.

The protein localises to the nucleus. The catalysed reaction is ATP + H2O = ADP + phosphate + H(+). Functionally, pre-mRNA processing factor involved in disassembly of spliceosomes after the release of mature mRNA. This is Pre-mRNA-splicing factor ATP-dependent RNA helicase ddx-15 from Caenorhabditis elegans.